Consider the following 270-residue polypeptide: 3-methyl-2-oxobutanoate hydroxymethyltransferase (270 aa).

Mg(2+) is bound by residues Asp50 and Asp89. Residues 50–51 (DS), Asp89, and Lys118 each bind 3-methyl-2-oxobutanoate. Residue Glu120 coordinates Mg(2+). Glu187 acts as the Proton acceptor in catalysis.

The protein belongs to the PanB family. As to quaternary structure, homodecamer; pentamer of dimers. Requires Mg(2+) as cofactor.

It localises to the cytoplasm. The catalysed reaction is 3-methyl-2-oxobutanoate + (6R)-5,10-methylene-5,6,7,8-tetrahydrofolate + H2O = 2-dehydropantoate + (6S)-5,6,7,8-tetrahydrofolate. It functions in the pathway cofactor biosynthesis; (R)-pantothenate biosynthesis; (R)-pantoate from 3-methyl-2-oxobutanoate: step 1/2. Functionally, catalyzes the reversible reaction in which hydroxymethyl group from 5,10-methylenetetrahydrofolate is transferred onto alpha-ketoisovalerate to form ketopantoate. This is 3-methyl-2-oxobutanoate hydroxymethyltransferase from Helicobacter acinonychis (strain Sheeba).